A 499-amino-acid polypeptide reads, in one-letter code: ATP synthase subunit alpha (499 aa).

Residue 169–176 coordinates ATP; it reads GDRGTGKT.

It belongs to the ATPase alpha/beta chains family. In terms of assembly, F-type ATPases have 2 components, CF(1) - the catalytic core - and CF(0) - the membrane proton channel. CF(1) has five subunits: alpha(3), beta(3), gamma(1), delta(1), epsilon(1). CF(0) has three main subunits: a(1), b(2) and c(9-12). The alpha and beta chains form an alternating ring which encloses part of the gamma chain. CF(1) is attached to CF(0) by a central stalk formed by the gamma and epsilon chains, while a peripheral stalk is formed by the delta and b chains.

Its subcellular location is the cell inner membrane. It carries out the reaction ATP + H2O + 4 H(+)(in) = ADP + phosphate + 5 H(+)(out). In terms of biological role, produces ATP from ADP in the presence of a proton gradient across the membrane. The alpha chain is a regulatory subunit. The protein is ATP synthase subunit alpha of Brachyspira hyodysenteriae (strain ATCC 49526 / WA1).